The following is a 487-amino-acid chain: Cobyric acid synthase (487 aa).

The GATase cobBQ-type domain occupies Val-248–Ser-435. Cys-329 acts as the Nucleophile in catalysis. Residue His-427 is part of the active site.

Belongs to the CobB/CobQ family. CobQ subfamily.

It participates in cofactor biosynthesis; adenosylcobalamin biosynthesis. Catalyzes amidations at positions B, D, E, and G on adenosylcobyrinic A,C-diamide. NH(2) groups are provided by glutamine, and one molecule of ATP is hydrogenolyzed for each amidation. The sequence is that of Cobyric acid synthase from Pseudomonas entomophila (strain L48).